Here is a 909-residue protein sequence, read N- to C-terminus: Epithelial discoidin domain-containing receptor 1 (909 aa).

The N-terminal stretch at 1–18 (MGPEALSSLLLLLLVASG) is a signal peptide. Topologically, residues 21–413 (DMKGHFDPAK…VAKAEGSPTA (393 aa)) are extracellular. The 151-residue stretch at 31–181 (CRYALGMQDR…VCLRVELYGC (151 aa)) folds into the F5/8 type C domain. Cystine bridges form between cysteine 31/cysteine 181 and cysteine 70/cysteine 173. Low complexity predominate over residues 45–60 (SDISASSSWSDSTAAR). Positions 45–65 (SDISASSSWSDSTAARHSSDG) are disordered. Positions 188-363 (LSYTAPVGQT…LFSEISFISD (176 aa)) are DS-like domain. 6 residues coordinate Ca(2+): asparagine 207, glutamine 226, aspartate 229, valine 231, tyrosine 249, and tyrosine 251. Asparagine 207 carries N-linked (GlcNAc...) asparagine glycosylation. N-linked (GlcNAc...) asparagine glycosylation is present at asparagine 256. Cysteine 299 and cysteine 344 are disulfide-bonded. Residues serine 356 and glutamate 357 each contribute to the Ca(2+) site. 2 N-linked (GlcNAc...) asparagine glycosylation sites follow: asparagine 366 and asparagine 390. The chain crosses the membrane as a helical span at residues 414–434 (ILIGCLVAIILLLLLIIALML). Residues 435–909 (WRLHWRRLLS…FLAEDALNTV (475 aa)) are Cytoplasmic-facing. Residues 466 to 495 (ILINNRPGPREPPPYQEPRPRGNPPHSAPC) are disordered. The span at 475–492 (REPPPYQEPRPRGNPPHS) shows a compositional bias: pro residues. The PPxY motif motif lies at 477–480 (PPPY). 3 positions are modified to phosphotyrosine; by autocatalysis: tyrosine 480, tyrosine 509, and tyrosine 516. A Protein kinase domain is found at 606–901 (LRFKEKLGEG…PPFSQLHRFL (296 aa)). An ATP-binding site is contributed by 612-620 (LGEGQFGEV). Phosphoserine is present on serine 627. Lysine 651 is a binding site for ATP. Position 736 is a phosphotyrosine; by autocatalysis (tyrosine 736). Aspartate 762 (proton acceptor) is an active-site residue. Phosphotyrosine; by autocatalysis occurs at positions 788, 792, and 793.

This sequence belongs to the protein kinase superfamily. Tyr protein kinase family. Insulin receptor subfamily. Homodimer. Interacts (via PPxY motif) with WWC1 (via WW domains) in a collagen-regulated manner. Forms a tripartite complex with WWC1 and PRKCZ, but predominantly in the absence of collagen. Interacts (tyrosine phosphorylated) with SHC1. Interacts with SRC. Interacts with MYH9. Interacts with CDH1. Interacts with PTPN11. Interacts with NCK2. In terms of processing, autophosphorylated in response to fibrillar collagen binding.

Its subcellular location is the cell membrane. The catalysed reaction is L-tyrosyl-[protein] + ATP = O-phospho-L-tyrosyl-[protein] + ADP + H(+). Tyrosine kinase that functions as a cell surface receptor for fibrillar collagen and regulates cell attachment to the extracellular matrix, remodeling of the extracellular matrix, cell migration, differentiation, survival and cell proliferation. Collagen binding triggers a signaling pathway that involves SRC and leads to the activation of MAP kinases. Regulates remodeling of the extracellular matrix by up-regulation of the matrix metalloproteinases MMP2, MMP7 and MMP9, and thereby facilitates cell migration and wound healing. Promotes smooth muscle cell migration, and thereby contributes to arterial wound healing. Also plays a role in tumor cell invasion. Phosphorylates PTPN11. Required for normal blastocyst implantation during pregnancy, for normal mammary gland differentiation and normal lactation. Required for normal ear morphology and normal hearing. The polypeptide is Epithelial discoidin domain-containing receptor 1 (DDR1) (Pan troglodytes (Chimpanzee)).